The primary structure comprises 63 residues: Cytochrome c oxidase subunit 7C, mitochondrial (63 aa).

The transit peptide at 1–16 (MLGQSIRRFTTSVVRR) directs the protein to the mitochondrion. The Mitochondrial matrix segment spans residues 17–33 (SHYEEGPGKNLPFSVEN). Residue Lys25 is modified to N6-acetyllysine; alternate. Lys25 bears the N6-succinyllysine; alternate mark. A helical transmembrane segment spans residues 34–60 (KWSLLAKMCLYFGSAFATPFLIVRHQL). Residues 61–63 (LKT) are Mitochondrial intermembrane-facing.

It belongs to the cytochrome c oxidase VIIc family. In terms of assembly, component of the cytochrome c oxidase (complex IV, CIV), a multisubunit enzyme composed of 14 subunits. The complex is composed of a catalytic core of 3 subunits MT-CO1, MT-CO2 and MT-CO3, encoded in the mitochondrial DNA, and 11 supernumerary subunits COX4I, COX5A, COX5B, COX6A, COX6B, COX6C, COX7A, COX7B, COX7C, COX8 and NDUFA4, which are encoded in the nuclear genome. The complex exists as a monomer or a dimer and forms supercomplexes (SCs) in the inner mitochondrial membrane with NADH-ubiquinone oxidoreductase (complex I, CI) and ubiquinol-cytochrome c oxidoreductase (cytochrome b-c1 complex, complex III, CIII), resulting in different assemblies (supercomplex SCI(1)III(2)IV(1) and megacomplex MCI(2)III(2)IV(2)). Interacts with RAB5IF.

The protein localises to the mitochondrion inner membrane. Its pathway is energy metabolism; oxidative phosphorylation. Component of the cytochrome c oxidase, the last enzyme in the mitochondrial electron transport chain which drives oxidative phosphorylation. The respiratory chain contains 3 multisubunit complexes succinate dehydrogenase (complex II, CII), ubiquinol-cytochrome c oxidoreductase (cytochrome b-c1 complex, complex III, CIII) and cytochrome c oxidase (complex IV, CIV), that cooperate to transfer electrons derived from NADH and succinate to molecular oxygen, creating an electrochemical gradient over the inner membrane that drives transmembrane transport and the ATP synthase. Cytochrome c oxidase is the component of the respiratory chain that catalyzes the reduction of oxygen to water. Electrons originating from reduced cytochrome c in the intermembrane space (IMS) are transferred via the dinuclear copper A center (CU(A)) of subunit 2 and heme A of subunit 1 to the active site in subunit 1, a binuclear center (BNC) formed by heme A3 and copper B (CU(B)). The BNC reduces molecular oxygen to 2 water molecules using 4 electrons from cytochrome c in the IMS and 4 protons from the mitochondrial matrix. The chain is Cytochrome c oxidase subunit 7C, mitochondrial (COX7C) from Pongo pygmaeus (Bornean orangutan).